The following is a 131-amino-acid chain: Profilin-1 (131 aa).

The protein belongs to the profilin family. As to quaternary structure, occurs in many kinds of cells as a complex with monomeric actin in a 1:1 ratio.

The protein localises to the cytoplasm. It localises to the cytoskeleton. Functionally, binds to actin and affects the structure of the cytoskeleton. At high concentrations, profilin prevents the polymerization of actin, whereas it enhances it at low concentrations. By binding to PIP2, it inhibits the formation of IP3 and DG. The polypeptide is Profilin-1 (PRO1) (Triticum aestivum (Wheat)).